Consider the following 236-residue polypeptide: Purine nucleoside phosphorylase DeoD-type (236 aa).

H4 provides a ligand contact to a purine D-ribonucleoside. Phosphate is bound by residues G20, R24, R43, and 87 to 90; that span reads RVGT. Residues 179 to 181 and 203 to 204 contribute to the a purine D-ribonucleoside site; these read EME and SD. D204 acts as the Proton donor in catalysis.

The protein belongs to the PNP/UDP phosphorylase family. As to quaternary structure, homohexamer; trimer of homodimers.

It carries out the reaction a purine D-ribonucleoside + phosphate = a purine nucleobase + alpha-D-ribose 1-phosphate. It catalyses the reaction a purine 2'-deoxy-D-ribonucleoside + phosphate = a purine nucleobase + 2-deoxy-alpha-D-ribose 1-phosphate. In terms of biological role, catalyzes the reversible phosphorolytic breakdown of the N-glycosidic bond in the beta-(deoxy)ribonucleoside molecules, with the formation of the corresponding free purine bases and pentose-1-phosphate. The polypeptide is Purine nucleoside phosphorylase DeoD-type (Streptococcus pneumoniae (strain CGSP14)).